The primary structure comprises 158 residues: Pyruvoyl-dependent arginine decarboxylase (158 aa).

Ser44 carries the pyruvic acid (Ser) modification.

The protein belongs to the PdaD family. Requires pyruvate as cofactor.

It catalyses the reaction L-arginine + H(+) = agmatine + CO2. The chain is Pyruvoyl-dependent arginine decarboxylase from Pyrococcus furiosus (strain ATCC 43587 / DSM 3638 / JCM 8422 / Vc1).